The primary structure comprises 116 residues: Putative pterin-4-alpha-carbinolamine dehydratase 1 (116 aa).

The protein belongs to the pterin-4-alpha-carbinolamine dehydratase family.

It catalyses the reaction (4aS,6R)-4a-hydroxy-L-erythro-5,6,7,8-tetrahydrobiopterin = (6R)-L-erythro-6,7-dihydrobiopterin + H2O. The chain is Putative pterin-4-alpha-carbinolamine dehydratase 1 from Cupriavidus pinatubonensis (strain JMP 134 / LMG 1197) (Cupriavidus necator (strain JMP 134)).